The following is a 584-amino-acid chain: 2-succinyl-5-enolpyruvyl-6-hydroxy-3-cyclohexene-1-carboxylate synthase (584 aa).

Belongs to the TPP enzyme family. MenD subfamily. In terms of assembly, homodimer. Requires Mg(2+) as cofactor. The cofactor is Mn(2+). It depends on thiamine diphosphate as a cofactor.

It carries out the reaction isochorismate + 2-oxoglutarate + H(+) = 5-enolpyruvoyl-6-hydroxy-2-succinyl-cyclohex-3-ene-1-carboxylate + CO2. Its pathway is quinol/quinone metabolism; 1,4-dihydroxy-2-naphthoate biosynthesis; 1,4-dihydroxy-2-naphthoate from chorismate: step 2/7. The protein operates within quinol/quinone metabolism; menaquinone biosynthesis. Its function is as follows. Catalyzes the thiamine diphosphate-dependent decarboxylation of 2-oxoglutarate and the subsequent addition of the resulting succinic semialdehyde-thiamine pyrophosphate anion to isochorismate to yield 2-succinyl-5-enolpyruvyl-6-hydroxy-3-cyclohexene-1-carboxylate (SEPHCHC). The protein is 2-succinyl-5-enolpyruvyl-6-hydroxy-3-cyclohexene-1-carboxylate synthase of Bacillus cytotoxicus (strain DSM 22905 / CIP 110041 / 391-98 / NVH 391-98).